The chain runs to 128 residues: Small ribosomal subunit protein uS12 (128 aa).

Residues 1-29 (MPTINQLIRKGREPKERKSKSPALMGNPQ) are disordered. The residue at position 89 (Asp89) is a 3-methylthioaspartic acid. Positions 106–128 (GVEGRRQGRSKYGAKRPKEGGKK) are disordered.

Belongs to the universal ribosomal protein uS12 family. As to quaternary structure, part of the 30S ribosomal subunit. Contacts proteins S8 and S17. May interact with IF1 in the 30S initiation complex.

Functionally, with S4 and S5 plays an important role in translational accuracy. Its function is as follows. Interacts with and stabilizes bases of the 16S rRNA that are involved in tRNA selection in the A site and with the mRNA backbone. Located at the interface of the 30S and 50S subunits, it traverses the body of the 30S subunit contacting proteins on the other side and probably holding the rRNA structure together. The combined cluster of proteins S8, S12 and S17 appears to hold together the shoulder and platform of the 30S subunit. In Dictyoglomus turgidum (strain DSM 6724 / Z-1310), this protein is Small ribosomal subunit protein uS12.